We begin with the raw amino-acid sequence, 403 residues long: Cell cycle checkpoint control protein RAD9B (403 aa).

Residues 285-347 (PLSQARRSHP…ASAGQDDIFE (63 aa)) are disordered. Phosphoserine is present on residues S354 and S363.

The protein belongs to the rad9 family. Interacts with HUS1, HUS1B, RAD1, RAD9A and RAD17.

This chain is Cell cycle checkpoint control protein RAD9B (Rad9b), found in Mus musculus (Mouse).